The sequence spans 312 residues: Acetyl-coenzyme A carboxylase carboxyl transferase subunit beta (312 aa).

A disordered region spans residues 1–52 (MEMDTAVENPAVEKNGQPTPSSTSTATDAAPTPNAPNRPAPNTAGNRKRGVP). The span at 18-32 (PTPSSTSTATDAAPT) shows a compositional bias: low complexity. In terms of domain architecture, CoA carboxyltransferase N-terminal spans 55-312 (VWRKCDSCGA…IATAIDYCGK (258 aa)). C59, C62, C78, and C81 together coordinate Zn(2+). The C4-type zinc-finger motif lies at 59 to 81 (CDSCGASLFYKEVQQRLNVCPQC).

The protein belongs to the AccD/PCCB family. In terms of assembly, acetyl-CoA carboxylase is a heterohexamer composed of biotin carboxyl carrier protein (AccB), biotin carboxylase (AccC) and two subunits each of ACCase subunit alpha (AccA) and ACCase subunit beta (AccD). Zn(2+) serves as cofactor.

The protein localises to the cytoplasm. It catalyses the reaction N(6)-carboxybiotinyl-L-lysyl-[protein] + acetyl-CoA = N(6)-biotinyl-L-lysyl-[protein] + malonyl-CoA. It participates in lipid metabolism; malonyl-CoA biosynthesis; malonyl-CoA from acetyl-CoA: step 1/1. Component of the acetyl coenzyme A carboxylase (ACC) complex. Biotin carboxylase (BC) catalyzes the carboxylation of biotin on its carrier protein (BCCP) and then the CO(2) group is transferred by the transcarboxylase to acetyl-CoA to form malonyl-CoA. The sequence is that of Acetyl-coenzyme A carboxylase carboxyl transferase subunit beta from Rhodopirellula baltica (strain DSM 10527 / NCIMB 13988 / SH1).